The following is a 367-amino-acid chain: Aflatoxin B1 aldehyde reductase member 2 (367 aa).

Residues 1-31 (MLRAASRAVGRAAVRSAQRSGTSVGRPLAMS) show a composition bias toward low complexity. The segment at 1–45 (MLRAASRAVGRAAVRSAQRSGTSVGRPLAMSRPPPPRAASGAPLR) is disordered. Residues 1 to 46 (MLRAASRAVGRAAVRSAQRSGTSVGRPLAMSRPPPPRAASGAPLRP) constitute a mitochondrion transit peptide. S40 is modified (phosphoserine). A Phosphothreonine modification is found at T48. D80 contributes to the NADP(+) binding site. The Proton donor role is filled by Y85. K136 is modified (N6-acetyllysine). H149 is a substrate binding site. Residues 179–180 (SN), Q205, 234–244 (NPLAGGLLTGK), and R258 contribute to the NADP(+) site. At K244 the chain carries N6-succinyllysine. Positions 268 and 271 each coordinate substrate. 326–334 (SSLEQLEQN) provides a ligand contact to NADP(+). Residue R367 coordinates substrate.

The protein belongs to the aldo/keto reductase family. Aldo/keto reductase 2 subfamily. Homodimer. In terms of tissue distribution, expressed in liver, kidney, testis and brain with low levels in skeletal muscle, spleen, heart and lung.

Its subcellular location is the mitochondrion. It localises to the golgi apparatus. The protein localises to the cytoplasm. The enzyme catalyses 4-hydroxybutanoate + NADP(+) = succinate semialdehyde + NADPH + H(+). With respect to regulation, inhibited by citrate, succinate and tartrate. Its function is as follows. Catalyzes the NADPH-dependent reduction of succinic semialdehyde to gamma-hydroxybutyrate. May have an important role in producing the neuromodulator gamma-hydroxybutyrate (GHB). Has broad substrate specificity. Can reduce the dialdehyde protein-binding form of aflatoxin B1 (AFB1) to the non-binding AFB1 dialcohol. May be involved in protection of liver against the toxic and carcinogenic effects of AFB1, a potent hepatocarcinogen. The protein is Aflatoxin B1 aldehyde reductase member 2 of Mus musculus (Mouse).